The sequence spans 734 residues: Serine protease FAM111B (734 aa).

The residue at position 1 (M1) is an N-acetylmethionine. Basic and acidic residues-rich tracts occupy residues 1-10 and 17-32; these read MNSMKTEENK and DDQR…TVMK. The disordered stretch occupies residues 1–32; it reads MNSMKTEENKSFSAMEDDQRTRPEVSKDTVMK. Residue K284 forms a Glycyl lysine isopeptide (Lys-Gly) (interchain with G-Cter in SUMO2) linkage. Residues 285–321 form a disordered region; sequence QNESATDEINHQSLIQSKKKVHKPKKDGETKDVEHSR. Residues 310-321 show a composition bias toward basic and acidic residues; the sequence is KDGETKDVEHSR. Active-site charge relay system residues include H490, D544, and S650. Positions 712 to 734 are disordered; the sequence is TYDEEKGKQESSLQDHQIEPMEC.

The protein belongs to the FAM111 family. In terms of tissue distribution, widely expressed.

In terms of biological role, serine protease. The protein is Serine protease FAM111B of Homo sapiens (Human).